A 514-amino-acid chain; its full sequence is Folylpolyglutamate synthase (514 aa).

Residue Gly82–Ser85 participates in ATP binding. Mg(2+) is bound by residues Ser107, Glu186, and His214. Arg339 and Asp355 together coordinate ATP.

Belongs to the folylpolyglutamate synthase family. A monovalent cation serves as cofactor.

Its subcellular location is the mitochondrion inner membrane. The protein resides in the mitochondrion matrix. The protein localises to the cytoplasm. It carries out the reaction (6S)-5,6,7,8-tetrahydrofolyl-(gamma-L-Glu)(n) + L-glutamate + ATP = (6S)-5,6,7,8-tetrahydrofolyl-(gamma-L-Glu)(n+1) + ADP + phosphate + H(+). It participates in cofactor biosynthesis; tetrahydrofolylpolyglutamate biosynthesis. Its function is as follows. Catalyzes conversion of folates to polyglutamate derivatives allowing concentration of folate compounds in the cell and the intracellular retention of these cofactors, which are important substrates for most of the folate-dependent enzymes that are involved in one-carbon transfer reactions involved in purine, pyrimidine and amino acid synthesis. The sequence is that of Folylpolyglutamate synthase (MET7) from Candida albicans (Yeast).